Here is a 967-residue protein sequence, read N- to C-terminus: Siderophore exporter MmpL4 (967 aa).

Helical transmembrane passes span 26-46, 210-230, 242-262, 303-323, 333-353, 384-404, 769-789, 793-813, 821-841, 875-895, and 913-934; these read AFAV…TVFV, VIFI…LLLI, VVAV…VSLL, AHVI…LSFA, IPCA…GPAV, WPLP…LALP, WDLL…MLII, FIAA…SFGL, ILAI…LLAV, VVTN…VSDL, and TLIV…WFWW. The disordered stretch occupies residues 943–967; sequence ARTPTVPSETQPAGRPLAMSSDRLG.

The protein belongs to the resistance-nodulation-cell division (RND) (TC 2.A.6) family. MmpL subfamily. As to quaternary structure, interacts with MmpS4.

The protein localises to the cell inner membrane. Functionally, part of an export system, which is required for biosynthesis and secretion of siderophores. In Mycobacterium tuberculosis (strain CDC 1551 / Oshkosh), this protein is Siderophore exporter MmpL4 (mmpL4).